A 944-amino-acid polypeptide reads, in one-letter code: ATP-dependent helicase fft1 (944 aa).

2 disordered regions span residues 89-109 (AAYD…ESSN) and 174-246 (SAQK…NSIP). The segment covering 92-108 (DPHDQPPERDVSLKESS) has biased composition (basic and acidic residues). Polar residues predominate over residues 174 to 184 (SAQKLNNQPIE). Basic and acidic residues predominate over residues 186–203 (SSVDKENAKRKRYVEEGT). Over residues 217–227 (LSDEETNEDDL) the composition is skewed to acidic residues. A compositionally biased stretch (polar residues) spans 230–246 (QSPTACTTDANIDNSIP). Residues 426–592 (CLMYKAKLSG…ISLLAFMLPK (167 aa)) enclose the Helicase ATP-binding domain. 439–446 (DEMGLGKT) lines the ATP pocket. The DEGH box motif lies at 543–546 (DEGH). The Helicase C-terminal domain occupies 766–923 (KVKKLCSLLK…DSEKIQKEIS (158 aa)).

The protein belongs to the SNF2/RAD54 helicase family.

The protein localises to the nucleus. The enzyme catalyses ATP + H2O = ADP + phosphate + H(+). Its function is as follows. DNA helicase that possesses intrinsic ATP-dependent nucleosome-remodeling activity and is required for heterochromatin organization. The chain is ATP-dependent helicase fft1 (fft1) from Schizosaccharomyces pombe (strain 972 / ATCC 24843) (Fission yeast).